Here is an 84-residue protein sequence, read N- to C-terminus: ATP synthase subunit c (84 aa).

The next 2 membrane-spanning stretches (helical) occupy residues 9–29 (IIGA…GFAI) and 54–74 (IVAG…LLFI).

This sequence belongs to the ATPase C chain family. F-type ATPases have 2 components, F(1) - the catalytic core - and F(0) - the membrane proton channel. F(1) has five subunits: alpha(3), beta(3), gamma(1), delta(1), epsilon(1). F(0) has three main subunits: a(1), b(2) and c(10-14). The alpha and beta chains form an alternating ring which encloses part of the gamma chain. F(1) is attached to F(0) by a central stalk formed by the gamma and epsilon chains, while a peripheral stalk is formed by the delta and b chains.

It is found in the cell inner membrane. In terms of biological role, f(1)F(0) ATP synthase produces ATP from ADP in the presence of a proton or sodium gradient. F-type ATPases consist of two structural domains, F(1) containing the extramembraneous catalytic core and F(0) containing the membrane proton channel, linked together by a central stalk and a peripheral stalk. During catalysis, ATP synthesis in the catalytic domain of F(1) is coupled via a rotary mechanism of the central stalk subunits to proton translocation. Key component of the F(0) channel; it plays a direct role in translocation across the membrane. A homomeric c-ring of between 10-14 subunits forms the central stalk rotor element with the F(1) delta and epsilon subunits. This is ATP synthase subunit c from Glaesserella parasuis serovar 5 (strain SH0165) (Haemophilus parasuis).